The following is a 252-amino-acid chain: Ribonuclease HII (252 aa).

Residues 68-252 form the RNase H type-2 domain; sequence EYVAGLDEVG…FGPVRDRLRS (185 aa). 3 residues coordinate a divalent metal cation: D74, E75, and D165.

It belongs to the RNase HII family. Mn(2+) is required as a cofactor. Mg(2+) serves as cofactor.

The protein resides in the cytoplasm. It catalyses the reaction Endonucleolytic cleavage to 5'-phosphomonoester.. In terms of biological role, endonuclease that specifically degrades the RNA of RNA-DNA hybrids. The chain is Ribonuclease HII from Lacticaseibacillus paracasei (strain ATCC 334 / BCRC 17002 / CCUG 31169 / CIP 107868 / KCTC 3260 / NRRL B-441) (Lactobacillus paracasei).